We begin with the raw amino-acid sequence, 500 residues long: Putative glucokinase-2 (500 aa).

S2 carries the N-acetylserine modification. At S2 the chain carries Phosphoserine. A Hexokinase domain is found at 12-498; sequence EALEDAVVEI…SGVGAALCAL (487 aa). A hexokinase small subdomain region spans residues 74–217; the sequence is NGTERGVLLA…LSMINVVALT (144 aa). K110 is a binding site for ATP. The interval 159–185 is glucose-binding; sequence KMGFTFSYPVDQTSLSSGTLIRWTKSF. The segment at 218–487 is hexokinase large subdomain; sequence NDTVGTFLSH…RKIHLRLAKD (270 aa). At S470 the chain carries Phosphoserine. Residue 487 to 492 participates in ATP binding; that stretch reads DGSGVG.

This sequence belongs to the hexokinase family.

It localises to the cytoplasm. The catalysed reaction is D-glucose + ATP = D-glucose 6-phosphate + ADP + H(+). It participates in carbohydrate degradation; glycolysis; D-glyceraldehyde 3-phosphate and glycerone phosphate from D-glucose: step 1/4. Its function is as follows. Putative glucokinase involved in phosphorylation of aldohexoses and glucose uptake. Involved in sporulation. Required for the full activation of the early meiotic inducer IME1. This Saccharomyces cerevisiae (strain ATCC 204508 / S288c) (Baker's yeast) protein is Putative glucokinase-2 (EMI2).